Here is a 562-residue protein sequence, read N- to C-terminus: MVASGFLLIASFMLVLFVLSRPLGGFLARLIEGEPFSALQKVEAGLWRCSGVKNAEMNGWQYALAILCFNLLGIVLLFVLLMTQGSLPLNPEHLPGMSWHLALNTAVSFVTNTNWQAYSGENTLSYLSQMAGLTVQNFLSAATGIAVAFALIRAFARHSATTLGNAWVDLVRITLYVLLPIALIIALIFVSQGVLQNLDDYLHITTLEGVQQTLPMGPVASQEAIKVLGTNGGGFFGANSAHPFENPTAFSNFVQMLAIFLIPCALCFAFGQVVGDNRQGHALIWAMSLIFIVAVVVVMYAELAGNPHLSPLGADSNSNMEGKESRFGILATSLYAVVTTAASCGAVNAMHDSFTALGGMIPLWLMQIGEVVFGGVGSGLYGMLLFVLLTVFIAGLMIGRTPEYLGKKIDVFDMKMTALAILVTPTIVLLGTALALCTEAGRAGILNPGAHGFSEVLYALSSAANNNGSAFAGLSVNTPFYNLLLAAAMFIGRFGVILPVLAIASSLVAKKRQPAGNGTLPTGGLLFIGLLIGTVLLVGALTFIPALALGPVAEHLQVWLAH.

12 consecutive transmembrane segments (helical) span residues 6 to 26 (FLLIASFMLVLFVLSRPLGGF), 62 to 82 (YALAILCFNLLGIVLLFVLLM), 132 to 152 (GLTVQNFLSAATGIAVAFALI), 175 to 195 (LYVLLPIALIIALIFVSQGVL), 253 to 273 (FVQMLAIFLIPCALCFAFGQV), 283 to 303 (LIWAMSLIFIVAVVVVMYAEL), 327 to 347 (FGILATSLYAVVTTAASCGAV), 356 to 376 (ALGGMIPLWLMQIGEVVFGGV), 379 to 399 (GLYGMLLFVLLTVFIAGLMIG), 416 to 436 (MTALAILVTPTIVLLGTALAL), 483 to 503 (LLLAAAMFIGRFGVILPVLAI), and 524 to 544 (GLLFIGLLIGTVLLVGALTFI).

The protein belongs to the KdpA family. The system is composed of three essential subunits: KdpA, KdpB and KdpC.

The protein resides in the cell inner membrane. Part of the high-affinity ATP-driven potassium transport (or Kdp) system, which catalyzes the hydrolysis of ATP coupled with the electrogenic transport of potassium into the cytoplasm. This subunit binds the periplasmic potassium ions and delivers the ions to the membrane domain of KdpB through an intramembrane tunnel. This Yersinia pestis bv. Antiqua (strain Antiqua) protein is Potassium-transporting ATPase potassium-binding subunit.